A 447-amino-acid chain; its full sequence is Multicopper oxidase mco (447 aa).

Positions 1–25 are enriched in basic and acidic residues; sequence MMNMKEDKKNTMDMTNMKHHDERKK. Residues 1–29 form a disordered region; the sequence is MMNMKEDKKNTMDMTNMKHHDERKKLNSS. 12 residues coordinate Cu cation: His107, His109, His147, His149, His375, His378, His380, His428, Cys429, His430, His434, and Met439.

This sequence belongs to the multicopper oxidase family. The cofactor is Cu cation.

It is found in the cytoplasm. May be involved in copper homeostasis and oxidative stress response. This chain is Multicopper oxidase mco (mco), found in Staphylococcus haemolyticus (strain JCSC1435).